The primary structure comprises 40 residues: Photosystem II reaction center protein J (40 aa).

A helical membrane pass occupies residues 8 to 28 (IPLWLIGTVAGILVLGLLGIF).

This sequence belongs to the PsbJ family. In terms of assembly, PSII is composed of 1 copy each of membrane proteins PsbA, PsbB, PsbC, PsbD, PsbE, PsbF, PsbH, PsbI, PsbJ, PsbK, PsbL, PsbM, PsbT, PsbX, PsbY, PsbZ, Psb30/Ycf12, at least 3 peripheral proteins of the oxygen-evolving complex and a large number of cofactors. It forms dimeric complexes.

The protein resides in the plastid. Its subcellular location is the chloroplast thylakoid membrane. Functionally, one of the components of the core complex of photosystem II (PSII). PSII is a light-driven water:plastoquinone oxidoreductase that uses light energy to abstract electrons from H(2)O, generating O(2) and a proton gradient subsequently used for ATP formation. It consists of a core antenna complex that captures photons, and an electron transfer chain that converts photonic excitation into a charge separation. The protein is Photosystem II reaction center protein J of Physcomitrium patens (Spreading-leaved earth moss).